We begin with the raw amino-acid sequence, 977 residues long: uncharacterized protein (977 aa).

The span at 1–24 (MMQQRSGSLSLLSNAVQAGQSSDP) shows a compositional bias: polar residues. Residues 1–65 (MMQQRSGSLS…HEKTKAGKDR (65 aa)) form a disordered region. A DNA-binding region (zn(2)-C6 fungal-type) is located at residues 72-99 (CQSCRKKKVKCSGERPSCDQCLKHNIPC). The tract at residues 176–195 (LSHPTIVPSSNSSSLLNSTN) is disordered. The segment covering 177–195 (SHPTIVPSSNSSSLLNSTN) has biased composition (low complexity). Serine 220 carries the phosphoserine modification. Disordered regions lie at residues 287–307 (TDSL…DSNR), 357–380 (NSAS…NNSL), and 751–774 (HTPI…ANGA). The span at 364–379 (STSYTNNNDTTSDNNS) shows a compositional bias: low complexity. The segment covering 751–770 (HTPINVTNGESQNNSNNDPS) has biased composition (polar residues).

It localises to the cytoplasm. It is found in the nucleus. This is an uncharacterized protein from Schizosaccharomyces pombe (strain 972 / ATCC 24843) (Fission yeast).